We begin with the raw amino-acid sequence, 90 residues long: Small ribosomal subunit protein bS16 (90 aa).

This sequence belongs to the bacterial ribosomal protein bS16 family.

The protein is Small ribosomal subunit protein bS16 of Brevibacillus brevis (strain 47 / JCM 6285 / NBRC 100599).